Reading from the N-terminus, the 184-residue chain is Shikimate kinase (184 aa).

17 to 22 (GAGKTT) lines the ATP pocket. T21 contributes to the Mg(2+) binding site. The substrate site is built by D39, R63, and G85. R123 provides a ligand contact to ATP. R142 is a substrate binding site.

It belongs to the shikimate kinase family. As to quaternary structure, monomer. The cofactor is Mg(2+).

The protein resides in the cytoplasm. It carries out the reaction shikimate + ATP = 3-phosphoshikimate + ADP + H(+). Its pathway is metabolic intermediate biosynthesis; chorismate biosynthesis; chorismate from D-erythrose 4-phosphate and phosphoenolpyruvate: step 5/7. Functionally, catalyzes the specific phosphorylation of the 3-hydroxyl group of shikimic acid using ATP as a cosubstrate. The polypeptide is Shikimate kinase (Burkholderia thailandensis (strain ATCC 700388 / DSM 13276 / CCUG 48851 / CIP 106301 / E264)).